The sequence spans 123 residues: Large ribosomal subunit protein uL14 (123 aa).

Belongs to the universal ribosomal protein uL14 family. Part of the 50S ribosomal subunit. Forms a cluster with proteins L3 and L19. In the 70S ribosome, L14 and L19 interact and together make contacts with the 16S rRNA in bridges B5 and B8.

Its function is as follows. Binds to 23S rRNA. Forms part of two intersubunit bridges in the 70S ribosome. This is Large ribosomal subunit protein uL14 from Vibrio vulnificus (strain CMCP6).